A 381-amino-acid chain; its full sequence is Queuine tRNA-ribosyltransferase (381 aa).

Catalysis depends on Asp89, which acts as the Proton acceptor. Substrate is bound by residues 89-93, Asp143, Gln187, and Gly214; that span reads DSGGF. The RNA binding stretch occupies residues 245 to 251; the sequence is GVGKPED. Asp264 (nucleophile) is an active-site residue. Residues 269–273 are RNA binding; important for wobble base 34 recognition; it reads TRNAR. Positions 302, 304, 307, and 333 each coordinate Zn(2+).

It belongs to the queuine tRNA-ribosyltransferase family. Homodimer. Within each dimer, one monomer is responsible for RNA recognition and catalysis, while the other monomer binds to the replacement base PreQ1. Zn(2+) serves as cofactor.

The enzyme catalyses 7-aminomethyl-7-carbaguanine + guanosine(34) in tRNA = 7-aminomethyl-7-carbaguanosine(34) in tRNA + guanine. The protein operates within tRNA modification; tRNA-queuosine biosynthesis. Functionally, catalyzes the base-exchange of a guanine (G) residue with the queuine precursor 7-aminomethyl-7-deazaguanine (PreQ1) at position 34 (anticodon wobble position) in tRNAs with GU(N) anticodons (tRNA-Asp, -Asn, -His and -Tyr). Catalysis occurs through a double-displacement mechanism. The nucleophile active site attacks the C1' of nucleotide 34 to detach the guanine base from the RNA, forming a covalent enzyme-RNA intermediate. The proton acceptor active site deprotonates the incoming PreQ1, allowing a nucleophilic attack on the C1' of the ribose to form the product. After dissociation, two additional enzymatic reactions on the tRNA convert PreQ1 to queuine (Q), resulting in the hypermodified nucleoside queuosine (7-(((4,5-cis-dihydroxy-2-cyclopenten-1-yl)amino)methyl)-7-deazaguanosine). In Pectobacterium carotovorum subsp. carotovorum (strain PC1), this protein is Queuine tRNA-ribosyltransferase.